Here is a 169-residue protein sequence, read N- to C-terminus: S-ribosylhomocysteine lyase (169 aa).

His54, His58, and Cys128 together coordinate Fe cation.

This sequence belongs to the LuxS family. In terms of assembly, homodimer. It depends on Fe cation as a cofactor.

The catalysed reaction is S-(5-deoxy-D-ribos-5-yl)-L-homocysteine = (S)-4,5-dihydroxypentane-2,3-dione + L-homocysteine. Functionally, involved in the synthesis of autoinducer 2 (AI-2) which is secreted by bacteria and is used to communicate both the cell density and the metabolic potential of the environment. The regulation of gene expression in response to changes in cell density is called quorum sensing. Catalyzes the transformation of S-ribosylhomocysteine (RHC) to homocysteine (HC) and 4,5-dihydroxy-2,3-pentadione (DPD). This Shewanella sp. (strain MR-4) protein is S-ribosylhomocysteine lyase.